Reading from the N-terminus, the 227-residue chain is 2,3-bisphosphoglycerate-dependent phosphoglycerate mutase (227 aa).

Substrate contacts are provided by residues 7–14 (RHGLSEWN), 20–21 (TG), Arg-59, 86–89 (ERHY), Lys-97, 113–114 (RR), and 182–183 (GN). Residue His-8 is the Tele-phosphohistidine intermediate of the active site. Glu-86 (proton donor/acceptor) is an active-site residue.

Belongs to the phosphoglycerate mutase family. BPG-dependent PGAM subfamily. In terms of assembly, homodimer.

It catalyses the reaction (2R)-2-phosphoglycerate = (2R)-3-phosphoglycerate. It functions in the pathway carbohydrate degradation; glycolysis; pyruvate from D-glyceraldehyde 3-phosphate: step 3/5. In terms of biological role, catalyzes the interconversion of 2-phosphoglycerate and 3-phosphoglycerate. This Actinobacillus succinogenes (strain ATCC 55618 / DSM 22257 / CCUG 43843 / 130Z) protein is 2,3-bisphosphoglycerate-dependent phosphoglycerate mutase.